The chain runs to 222 residues: ATP-dependent Clp protease proteolytic subunit 1 (222 aa).

Catalysis depends on Ser121, which acts as the Nucleophile. His146 is an active-site residue.

The protein belongs to the peptidase S14 family. In terms of assembly, fourteen ClpP subunits assemble into 2 heptameric rings which stack back to back to give a disk-like structure with a central cavity, resembling the structure of eukaryotic proteasomes.

It is found in the cytoplasm. It catalyses the reaction Hydrolysis of proteins to small peptides in the presence of ATP and magnesium. alpha-casein is the usual test substrate. In the absence of ATP, only oligopeptides shorter than five residues are hydrolyzed (such as succinyl-Leu-Tyr-|-NHMec, and Leu-Tyr-Leu-|-Tyr-Trp, in which cleavage of the -Tyr-|-Leu- and -Tyr-|-Trp bonds also occurs).. Its function is as follows. Cleaves peptides in various proteins in a process that requires ATP hydrolysis. Has a chymotrypsin-like activity. Plays a major role in the degradation of misfolded proteins. In Thermobifida fusca (strain YX), this protein is ATP-dependent Clp protease proteolytic subunit 1.